The primary structure comprises 334 residues: Beta-ketoacyl-[acyl-carrier-protein] synthase III (334 aa).

Catalysis depends on residues Cys-114 and His-253. Positions 254 to 258 are ACP-binding; that stretch reads QANIR. Residue Asn-283 is part of the active site.

It belongs to the thiolase-like superfamily. FabH family. In terms of assembly, homodimer.

Its subcellular location is the cytoplasm. The catalysed reaction is malonyl-[ACP] + acetyl-CoA + H(+) = 3-oxobutanoyl-[ACP] + CO2 + CoA. It participates in lipid metabolism; fatty acid biosynthesis. Catalyzes the condensation reaction of fatty acid synthesis by the addition to an acyl acceptor of two carbons from malonyl-ACP. Catalyzes the first condensation reaction which initiates fatty acid synthesis and may therefore play a role in governing the total rate of fatty acid production. Possesses both acetoacetyl-ACP synthase and acetyl transacylase activities. Its substrate specificity determines the biosynthesis of branched-chain and/or straight-chain of fatty acids. This chain is Beta-ketoacyl-[acyl-carrier-protein] synthase III, found in Campylobacter concisus (strain 13826).